Here is a 421-residue protein sequence, read N- to C-terminus: Aspartokinase (421 aa).

ATP is bound at residue 7–10 (KYGG). A substrate-binding site is contributed by 25–30 (RIVATK). Ser41 contacts ATP. Substrate contacts are provided by residues 45-49 (DTTDE), Glu74, 125-126 (LD), 151-154 (RGGS), and Ser154. ATP contacts are provided by residues 174–175 (SD), 180–185 (YTADPR), and Lys210. 2 ACT domains span residues 267–343 (VTVL…YDDQ) and 349–421 (LVGA…GTGR). Residues Asp274, 274-279 (DKPGEA), 292-294 (NID), Gln298, 360-361 (VT), 374-375 (NI), and 381-382 (SE) contribute to the substrate site.

This sequence belongs to the aspartokinase family. As to quaternary structure, tetramer consisting of 2 isoforms Alpha (catalytic and regulation) and of a homodimer of 2 isoforms Beta (regulation). The dimerization of the beta isoforms is stabilized by the bonding of threonine.

The enzyme catalyses L-aspartate + ATP = 4-phospho-L-aspartate + ADP. The protein operates within amino-acid biosynthesis; L-lysine biosynthesis via DAP pathway; (S)-tetrahydrodipicolinate from L-aspartate: step 1/4. It functions in the pathway amino-acid biosynthesis; L-methionine biosynthesis via de novo pathway; L-homoserine from L-aspartate: step 1/3. Its pathway is amino-acid biosynthesis; L-threonine biosynthesis; L-threonine from L-aspartate: step 1/5. Its activity is regulated as follows. Feedback inhibition by lysine and threonine, but he enzyme is moderately inhibited by lysine alone, and threonine alone has no effect. Catalyzes the phosphorylation of the beta-carboxyl group of aspartic acid with ATP to yield 4-phospho-L-aspartate, which is involved in the branched biosynthetic pathway leading to the biosynthesis of amino acids lysine, threonine, isoleucine and methionine. The polypeptide is Aspartokinase (lysC) (Corynebacterium glutamicum (strain ATCC 13032 / DSM 20300 / JCM 1318 / BCRC 11384 / CCUG 27702 / LMG 3730 / NBRC 12168 / NCIMB 10025 / NRRL B-2784 / 534)).